Reading from the N-terminus, the 183-residue chain is Dual-action ribosomal maturation protein DarP (183 aa).

Residues 1 to 27 (MSSHSQEPVGEENFDDSEYDRPNKSQV) form a disordered region. Residues 9-18 (VGEENFDDSE) show a composition bias toward acidic residues.

It belongs to the DarP family.

The protein resides in the cytoplasm. Functionally, member of a network of 50S ribosomal subunit biogenesis factors which assembles along the 30S-50S interface, preventing incorrect 23S rRNA structures from forming. Promotes peptidyl transferase center (PTC) maturation. The chain is Dual-action ribosomal maturation protein DarP from Bordetella pertussis (strain Tohama I / ATCC BAA-589 / NCTC 13251).